Reading from the N-terminus, the 252-residue chain is Chitooligosaccharide deacetylase (252 aa).

Mg(2+)-binding residues include histidine 61 and histidine 125.

Belongs to the YdjC deacetylase family. ChbG subfamily. As to quaternary structure, homodimer. Mg(2+) is required as a cofactor.

It is found in the cytoplasm. The enzyme catalyses N,N'-diacetylchitobiose + H2O = N-acetyl-beta-D-glucosaminyl-(1-&gt;4)-D-glucosamine + acetate. It catalyses the reaction diacetylchitobiose-6'-phosphate + H2O = N'-monoacetylchitobiose-6'-phosphate + acetate. The protein operates within glycan degradation; chitin degradation. Its function is as follows. Involved in the degradation of chitin. ChbG is essential for growth on the acetylated chitooligosaccharides chitobiose and chitotriose but is dispensable for growth on cellobiose and chitosan dimer, the deacetylated form of chitobiose. Deacetylation of chitobiose-6-P and chitotriose-6-P is necessary for both the activation of the chb promoter by the regulatory protein ChbR and the hydrolysis of phosphorylated beta-glucosides by the phospho-beta-glucosidase ChbF. Catalyzes the removal of only one acetyl group from chitobiose-6-P to yield monoacetylchitobiose-6-P, the inducer of ChbR and the substrate of ChbF. The polypeptide is Chitooligosaccharide deacetylase (Salmonella typhimurium (strain LT2 / SGSC1412 / ATCC 700720)).